A 432-amino-acid chain; its full sequence is 3-chlorobenzoate-3,4-dioxygenase oxygenase subunit (432 aa).

The Rieske domain occupies 27–133 (WIPALKSTEL…VKEMAGVVWV (107 aa)). Positions 69, 71, 88, and 91 each coordinate [2Fe-2S] cluster. Fe cation-binding residues include His-180 and His-185.

Belongs to the bacterial ring-hydroxylating dioxygenase alpha subunit family. In terms of assembly, this dioxygenase system consists of two proteins: an oxygenase and an oxygenase reductase. [2Fe-2S] cluster serves as cofactor. Fe cation is required as a cofactor.

This is 3-chlorobenzoate-3,4-dioxygenase oxygenase subunit (cbaA) from Comamonas testosteroni (Pseudomonas testosteroni).